A 719-amino-acid chain; its full sequence is Polyribonucleotide nucleotidyltransferase (719 aa).

Mg(2+)-binding residues include Asp507 and Asp513. The KH domain occupies 573–633 (PKLELFSVDP…EQIKAAKDYI (61 aa)). The region spanning 658–719 (GQEFQGIVKK…NGKISVDLCE (62 aa)) is the S1 motif domain.

Belongs to the polyribonucleotide nucleotidyltransferase family. Mg(2+) serves as cofactor.

The protein localises to the cytoplasm. It carries out the reaction RNA(n+1) + phosphate = RNA(n) + a ribonucleoside 5'-diphosphate. In terms of biological role, involved in mRNA degradation. Catalyzes the phosphorolysis of single-stranded polyribonucleotides processively in the 3'- to 5'-direction. The polypeptide is Polyribonucleotide nucleotidyltransferase (Campylobacter jejuni subsp. jejuni serotype O:23/36 (strain 81-176)).